A 528-amino-acid chain; its full sequence is Phosphoenolpyruvate carboxykinase (ATP) (528 aa).

Residues R56, Y192, and K198 each coordinate substrate. Residues K198, H217, and 233–241 (GLSGTGKTT) each bind ATP. Residues K198 and H217 each contribute to the Mn(2+) site. D254 serves as a coordination point for Mn(2+). ATP contacts are provided by E282, R319, and T444. R319 is a substrate binding site.

This sequence belongs to the phosphoenolpyruvate carboxykinase (ATP) family. The cofactor is Mn(2+).

It is found in the cytoplasm. The enzyme catalyses oxaloacetate + ATP = phosphoenolpyruvate + ADP + CO2. The protein operates within carbohydrate biosynthesis; gluconeogenesis. Involved in the gluconeogenesis. Catalyzes the conversion of oxaloacetate (OAA) to phosphoenolpyruvate (PEP) through direct phosphoryl transfer between the nucleoside triphosphate and OAA. The sequence is that of Phosphoenolpyruvate carboxykinase (ATP) from Bacillus cytotoxicus (strain DSM 22905 / CIP 110041 / 391-98 / NVH 391-98).